The sequence spans 765 residues: Putative chloride channel-like protein CLC-g (765 aa).

A run of 12 helical transmembrane segments spans residues 67–87 (VFMK…IGFA), 116–136 (FVVF…ITAF), 167–187 (LIIK…IGKA), 190–210 (MVHT…KRYR), 232–252 (GAAA…LFAL), 262–282 (ALLW…RALI), 315–335 (VLPV…YNFL), 355–375 (ILLA…LPFL), 438–458 (FSVL…YGIV), 462–482 (GLFV…GMLL), 494–514 (AVLG…STCV), and 515–535 (ILLE…VLLI). The CBS 1 domain maps to 568-640 (MRQLLVGDVV…LLKKRVFMPS (73 aa)). Position 646 is a phosphoserine (Ser646). A CBS 2 domain is found at 687–748 (FSNASPYTVV…PEHILGLHPS (62 aa)). Residues 715–735 (HLLVIPKTSNRPPVVGILTRH) traverse the membrane as a helical segment.

Belongs to the chloride channel (TC 2.A.49) family. As to quaternary structure, homodimer. Interacts with PP2A5.

The protein localises to the membrane. Its function is as follows. Putative voltage-gated chloride channel. This is Putative chloride channel-like protein CLC-g (CLC-G) from Arabidopsis thaliana (Mouse-ear cress).